A 952-amino-acid chain; its full sequence is Probable mixed-linked glucan synthase 6 (952 aa).

The next 2 membrane-spanning stretches (helical) occupy residues 102-122 (LLHP…LFVI) and 132-152 (AMWL…SWLL). Residue Asp-227 is part of the active site. Residues 278–308 (EEFVNDRRRVRKEYDDFKARINGLEHDIKQR) adopt a coiled-coil conformation. Positions 429 and 431 each coordinate substrate. The active site involves Asp-636. The next 6 membrane-spanning stretches (helical) occupy residues 718–738 (LFLI…HFIV), 744–764 (MFYV…VLEV), 782–802 (MTAS…KVVF), 834–854 (WLMI…AVAF), 865–885 (WLKV…LYPF), and 898–918 (VVVL…YINI).

This sequence belongs to the glycosyltransferase 2 family. Plant cellulose synthase-like F subfamily.

Its subcellular location is the golgi apparatus membrane. Functionally, may catalyze both beta-1,3 and beta-1,4 glycosidic linkage on beta-D-glucan. Essential for (1,3;1,4)-beta-D-glucans synthesis in grasses and cereals (Poaceae). The mixed-linked glucans (which are not present in walls of dicotyledons or most other monocotyledonous plants) are particularly important constituents of the walls of the starchy endosperm and aleurone cells of cereal grains such as oats, wheat, rice and barley. They can account for up to 70% by weight of the wall. In Oryza sativa subsp. japonica (Rice), this protein is Probable mixed-linked glucan synthase 6 (CSLF6).